A 285-amino-acid chain; its full sequence is Bifunctional protein FolD (285 aa).

Residues 163 to 165, Ser-188, and Ala-231 contribute to the NADP(+) site; that span reads GRS.

The protein belongs to the tetrahydrofolate dehydrogenase/cyclohydrolase family. Homodimer.

It carries out the reaction (6R)-5,10-methylene-5,6,7,8-tetrahydrofolate + NADP(+) = (6R)-5,10-methenyltetrahydrofolate + NADPH. The enzyme catalyses (6R)-5,10-methenyltetrahydrofolate + H2O = (6R)-10-formyltetrahydrofolate + H(+). The protein operates within one-carbon metabolism; tetrahydrofolate interconversion. Functionally, catalyzes the oxidation of 5,10-methylenetetrahydrofolate to 5,10-methenyltetrahydrofolate and then the hydrolysis of 5,10-methenyltetrahydrofolate to 10-formyltetrahydrofolate. This chain is Bifunctional protein FolD, found in Oenococcus oeni (strain ATCC BAA-331 / PSU-1).